We begin with the raw amino-acid sequence, 715 residues long: Scinderin (715 aa).

Residues 1–363 (MARELYHEEF…DGFGKVYVTE (363 aa)) are actin-severing. The Gelsolin-like 1 repeat unit spans residues 27–76 (LELVPVPQSAHGDFYVGDAYLVLHTAKTSRGFTYHLHFWLGKECSQDEST). Tyr102 is subject to Phosphotyrosine. Residues 112-119 (KGGLKYKA) and 138-146 (RLLHVKGRR) each bind a 1,2-diacyl-sn-glycero-3-phospho-(1D-myo-inositol-4,5-bisphosphate). Gelsolin-like repeat units lie at residues 148–188 (VRAT…YERL), 265–307 (VVAE…QERK), 398–451 (VEIW…DELT), and 523–564 (TRIV…EEEK). The interval 364-715 (KVAQIKQIPF…WFLGWDSSKW (352 aa)) is ca(2+)-dependent actin binding. Residues Asn538, Asp539, and Glu562 each contribute to the Ca(2+) site. At Tyr599 the chain carries Phosphotyrosine. Residues 626–668 (FVIEEIPGEFTQDDLAEDDVMLLDAWEQIFIWIGKDANEVEKK) form a Gelsolin-like 6 repeat. Residues Asp643, Asp644, and Glu666 each coordinate Ca(2+).

Belongs to the villin/gelsolin family. In terms of tissue distribution, expressed in megakaryocytes.

The protein resides in the cytoplasm. It is found in the cytoskeleton. The protein localises to the cell projection. It localises to the podosome. In terms of biological role, ca(2+)-dependent actin filament-severing protein that has a regulatory function in exocytosis by affecting the organization of the microfilament network underneath the plasma membrane. Severing activity is inhibited by phosphatidylinositol 4,5-bis-phosphate (PIP2). In vitro, also has barbed end capping and nucleating activities in the presence of Ca(2+). Required for megakaryocyte differentiation, maturation, polyploidization and apoptosis with the release of platelet-like particles. Plays a role in osteoclastogenesis (OCG) and actin cytoskeletal organization in osteoclasts. Regulates chondrocyte proliferation and differentiation. Inhibits cell proliferation and tumorigenesis. Signaling is mediated by MAPK, p38 and JNK pathways. In Homo sapiens (Human), this protein is Scinderin.